A 156-amino-acid chain; its full sequence is MPRKGPAPKRPLINDPVYGSPLVTQLVNKILLDGKKSTAERIVYQALEQAREKTGTDPVVTLKRALDNVKPALEVRSRRVGGATYQVPVEVRPGRSTTLALRWLVTFSRARREKTMVERLANELLDASNGLGAAVKRREDTHKMAEANKAFAHYRW.

It belongs to the universal ribosomal protein uS7 family. As to quaternary structure, part of the 30S ribosomal subunit. Contacts proteins S9 and S11.

In terms of biological role, one of the primary rRNA binding proteins, it binds directly to 16S rRNA where it nucleates assembly of the head domain of the 30S subunit. Is located at the subunit interface close to the decoding center, probably blocks exit of the E-site tRNA. This Rhodococcus erythropolis (strain PR4 / NBRC 100887) protein is Small ribosomal subunit protein uS7.